Here is a 231-residue protein sequence, read N- to C-terminus: Ribonuclease HII (231 aa).

The 192-residue stretch at 32–223 folds into the RNase H type-2 domain; sequence WPVAGMDEAG…FRLGGTEVVE (192 aa). The a divalent metal cation site is built by Asp38, Glu39, and Asp130.

Belongs to the RNase HII family. The cofactor is Mn(2+). It depends on Mg(2+) as a cofactor.

The protein resides in the cytoplasm. The enzyme catalyses Endonucleolytic cleavage to 5'-phosphomonoester.. In terms of biological role, endonuclease that specifically degrades the RNA of RNA-DNA hybrids. This Mesorhizobium japonicum (strain LMG 29417 / CECT 9101 / MAFF 303099) (Mesorhizobium loti (strain MAFF 303099)) protein is Ribonuclease HII.